The following is a 295-amino-acid chain: Acetylglutamate kinase (295 aa).

Substrate is bound by residues 66–67 (GG), Arg88, and Asn193.

It belongs to the acetylglutamate kinase family. ArgB subfamily.

It is found in the cytoplasm. It carries out the reaction N-acetyl-L-glutamate + ATP = N-acetyl-L-glutamyl 5-phosphate + ADP. It functions in the pathway amino-acid biosynthesis; L-arginine biosynthesis; N(2)-acetyl-L-ornithine from L-glutamate: step 2/4. Functionally, catalyzes the ATP-dependent phosphorylation of N-acetyl-L-glutamate. The protein is Acetylglutamate kinase of Afipia carboxidovorans (strain ATCC 49405 / DSM 1227 / KCTC 32145 / OM5) (Oligotropha carboxidovorans).